The sequence spans 216 residues: Probable nicotinate-nucleotide adenylyltransferase (216 aa).

The protein belongs to the NadD family.

The catalysed reaction is nicotinate beta-D-ribonucleotide + ATP + H(+) = deamido-NAD(+) + diphosphate. It functions in the pathway cofactor biosynthesis; NAD(+) biosynthesis; deamido-NAD(+) from nicotinate D-ribonucleotide: step 1/1. In terms of biological role, catalyzes the reversible adenylation of nicotinate mononucleotide (NaMN) to nicotinic acid adenine dinucleotide (NaAD). This chain is Probable nicotinate-nucleotide adenylyltransferase, found in Geobacter sulfurreducens (strain ATCC 51573 / DSM 12127 / PCA).